A 211-amino-acid polypeptide reads, in one-letter code: GTP pyrophosphokinase YjbM (211 aa).

Residues 21–28 (KVKLKGIR), 41–42 (EF), and 46–48 (RVK) contribute to the guanosine 3'-diphosphate 5'-triphosphate site. ATP is bound by residues 46-48 (RVK), Ser52, 56-59 (KARR), Asp72, and Arg77. Guanosine 3'-diphosphate 5'-triphosphate is bound at residue Arg59. A Mg(2+)-binding site is contributed by Asp72. Guanosine 3'-diphosphate 5'-triphosphate-binding positions include Arg105, 112 to 114 (KES), and His120. Catalysis depends on Glu139, which acts as the Proton acceptor. Guanosine 3'-diphosphate 5'-triphosphate is bound by residues Asn148 and 151-155 (ATIEH).

This sequence belongs to the RelA/SpoT family. As to quaternary structure, homotetramer.

The enzyme catalyses GTP + ATP = guanosine 3'-diphosphate 5'-triphosphate + AMP. It catalyses the reaction GDP + ATP = guanosine 3',5'-bis(diphosphate) + AMP. The protein operates within purine metabolism; ppGpp biosynthesis; ppGpp from GTP: step 1/2. Allosterically regulated by its own products; pppGpp simulates synthesis 10-fold more than ppGpp. 2 pppGpp molecules bind in a regulatory cleft in the middle of the tetramer in an asymmetric manner. There is a specific contact of Lys-25 to the gamma-phosphate of pppGpp, explaining why pppGpp stimulates activity but ppGpp does not. Functionally, functions as a (p)ppGpp synthase; GDP can be used instead of GTP, resulting in an increase of (p)ppGpp synthesis. The enzyme binds ATP, then GDP or GTP and catalysis is highly cooperative. In eubacteria ppGpp (guanosine 3'-diphosphate 5'-diphosphate) is a mediator of the stringent response that coordinates a variety of cellular activities in response to changes in nutritional abundance. Probably has a minor role in the stringent response. This chain is GTP pyrophosphokinase YjbM (yjbM), found in Bacillus subtilis (strain 168).